The chain runs to 245 residues: tRNA pseudouridine synthase A (245 aa).

The active-site Nucleophile is Asp-52. Residue Tyr-111 coordinates substrate.

Belongs to the tRNA pseudouridine synthase TruA family. Homodimer.

It carries out the reaction uridine(38/39/40) in tRNA = pseudouridine(38/39/40) in tRNA. Formation of pseudouridine at positions 38, 39 and 40 in the anticodon stem and loop of transfer RNAs. In Thermotoga petrophila (strain ATCC BAA-488 / DSM 13995 / JCM 10881 / RKU-1), this protein is tRNA pseudouridine synthase A.